Reading from the N-terminus, the 353-residue chain is Jasmonate-induced oxygenase 4 (353 aa).

Residues 202–302 (VGASLRTNFY…RVSLAFFYNP (101 aa)) form the Fe2OG dioxygenase domain. Residue arginine 207 participates in jasmonate binding. Positions 209 and 211 each coordinate 2-oxoglutarate. The Fe cation site is built by histidine 226, aspartate 228, and histidine 283. The 2-oxoglutarate site is built by arginine 293 and serine 295. Residues arginine 332 and arginine 336 each coordinate jasmonate.

The protein belongs to the iron/ascorbate-dependent oxidoreductase family. Requires L-ascorbate as cofactor. Fe(2+) serves as cofactor.

It catalyses the reaction jasmonate + 2-oxoglutarate + O2 = (1R,2R)-12-hydroxyjasmonate + succinate + CO2. In terms of biological role, 2-oxoglutarate-dependent dioxygenase involved in the oxidation of jasmonate (JA), a stress-induced phytohormone synthesized in response to attack by pathogens and herbivores, which triggers the activation of defense responses via the JA-mediated signaling pathway. Converts JA to 12-hydroxyjasmonate (12OH-JA), an inactive form of JA. Is specific to free JA, and cannot oxidize the bioactive form jasmonoyl-L-isoleucine (JA-Ile) or other JA-amino acid conjugates. Prevents over-accumulation of JA and indirectly its bioactive form JA-Ile under stress response. Acts as a negative regulator of JA-mediated defense signaling, by contributing to 12OH-JA accumulation, which represses JA defense responses upon infection by the fungal pathogen Botrytis cinerea. Acts as a negative regulator of JA-mediated defense responses upon infestation by the herbivorous caterpillar Mamestra brassicae. The polypeptide is Jasmonate-induced oxygenase 4 (Arabidopsis thaliana (Mouse-ear cress)).